The chain runs to 304 residues: Nucleotide-binding protein SH2124 (304 aa).

19–26 provides a ligand contact to ATP; that stretch reads GLSGAGKS. Position 70–73 (70–73) interacts with GTP; that stretch reads DLRG.

This sequence belongs to the RapZ-like family.

Displays ATPase and GTPase activities. The protein is Nucleotide-binding protein SH2124 of Staphylococcus haemolyticus (strain JCSC1435).